Reading from the N-terminus, the 145-residue chain is Actin-depolymerizing factor 2 (145 aa).

In terms of domain architecture, ADF-H spans 13 to 145 (GMGVAPDIRD…DLEVLRERAH (133 aa)).

It belongs to the actin-binding proteins ADF family.

In terms of biological role, actin-depolymerizing protein. Severs actin filaments (F-actin) and binds to actin monomers. This chain is Actin-depolymerizing factor 2 (ADF2), found in Oryza sativa subsp. japonica (Rice).